The chain runs to 363 residues: MTSEEIHAAGLCSVVPTIFQNCDNDWISKNGTCYQDSCCMSLETATSWYYRLAQFSHVVFSFMGLIIVVVYILRYRSRHILPENVRVLVDFMLLFIVAHSIDMIVLHIYHIIQSFQANISDPCFVREKVSFCAPFRYTFSFCSMGLAICTYCIYIDRLACAYYKNYTKHQRLILAAQICQLIVISSLIIIWVYRNEEPNTYLLSCLNVPVASVEDMAKATIAVFPINFICFFLSIGLFRHFKKKEEGSRFDIVRHFTASVDVESSEFLFRTTGTQAALMALFSVASLLMRLVYNFLPRQVGLTIATLSYIMSIYCFTVPLVIVKCVQKTSALRKSRISSHVGLKAMGVEGASNYFEMMKSQWE.

7 consecutive transmembrane segments (helical) span residues 52–72 (LAQF…VVYI), 92–112 (MLLF…YHII), 135–155 (FRYT…CIYI), 172–192 (LILA…IIWV), 218–238 (KATI…IGLF), 276–296 (AALM…YNFL), and 303–323 (TIAT…LVIV).

It belongs to the nematode receptor-like protein srb family.

The protein localises to the membrane. This chain is Serpentine receptor class beta-18 (srb-18), found in Caenorhabditis elegans.